A 179-amino-acid chain; its full sequence is UPF0303 protein YBR137W (179 aa).

This sequence belongs to the UPF0303 family.

It is found in the cytoplasm. The sequence is that of UPF0303 protein YBR137W from Saccharomyces cerevisiae (strain ATCC 204508 / S288c) (Baker's yeast).